Here is a 242-residue protein sequence, read N- to C-terminus: ATP synthase subunit a (242 aa).

Transmembrane regions (helical) follow at residues Ser-29–Tyr-49, Phe-84–Thr-104, Ile-114–Val-134, Phe-140–Ile-160, Met-181–Leu-201, and Phe-203–Gln-223.

It belongs to the ATPase A chain family. In terms of assembly, F-type ATPases have 2 components, CF(1) - the catalytic core - and CF(0) - the membrane proton channel. CF(1) has five subunits: alpha(3), beta(3), gamma(1), delta(1), epsilon(1). CF(0) has three main subunits: a(1), b(2) and c(9-12). The alpha and beta chains form an alternating ring which encloses part of the gamma chain. CF(1) is attached to CF(0) by a central stalk formed by the gamma and epsilon chains, while a peripheral stalk is formed by the delta and b chains.

The protein resides in the cell inner membrane. Functionally, key component of the proton channel; it plays a direct role in the translocation of protons across the membrane. This is ATP synthase subunit a from Rickettsia peacockii (strain Rustic).